Reading from the N-terminus, the 237-residue chain is 1-(5-phosphoribosyl)-5-[(5-phosphoribosylamino)methylideneamino] imidazole-4-carboxamide isomerase (237 aa).

Asp-8 functions as the Proton acceptor in the catalytic mechanism. The Proton donor role is filled by Asp-128.

Belongs to the HisA/HisF family.

It localises to the cytoplasm. The enzyme catalyses 1-(5-phospho-beta-D-ribosyl)-5-[(5-phospho-beta-D-ribosylamino)methylideneamino]imidazole-4-carboxamide = 5-[(5-phospho-1-deoxy-D-ribulos-1-ylimino)methylamino]-1-(5-phospho-beta-D-ribosyl)imidazole-4-carboxamide. It participates in amino-acid biosynthesis; L-histidine biosynthesis; L-histidine from 5-phospho-alpha-D-ribose 1-diphosphate: step 4/9. The chain is 1-(5-phosphoribosyl)-5-[(5-phosphoribosylamino)methylideneamino] imidazole-4-carboxamide isomerase from Gemmatimonas aurantiaca (strain DSM 14586 / JCM 11422 / NBRC 100505 / T-27).